We begin with the raw amino-acid sequence, 349 residues long: Anthranilate phosphoribosyltransferase (349 aa).

Residues G82, 85 to 86 (GD), 92 to 95 (NVST), 110 to 118 (KHGNRAVSG), and S122 contribute to the 5-phospho-alpha-D-ribose 1-diphosphate site. G82 serves as a coordination point for anthranilate. S94 is a binding site for Mg(2+). N113 lines the anthranilate pocket. R168 is an anthranilate binding site. Mg(2+) is bound by residues D227 and E228.

Belongs to the anthranilate phosphoribosyltransferase family. In terms of assembly, homodimer. Mg(2+) is required as a cofactor.

It catalyses the reaction N-(5-phospho-beta-D-ribosyl)anthranilate + diphosphate = 5-phospho-alpha-D-ribose 1-diphosphate + anthranilate. Its pathway is amino-acid biosynthesis; L-tryptophan biosynthesis; L-tryptophan from chorismate: step 2/5. In terms of biological role, catalyzes the transfer of the phosphoribosyl group of 5-phosphorylribose-1-pyrophosphate (PRPP) to anthranilate to yield N-(5'-phosphoribosyl)-anthranilate (PRA). The polypeptide is Anthranilate phosphoribosyltransferase (Pseudomonas entomophila (strain L48)).